Here is a 678-residue protein sequence, read N- to C-terminus: MGVHFDDNANTTWEATDPGVSSDCDGQHRVTESIQLQNFSNTDMESMLDEEGRENSKSKWLLLKRKHPIQKFIERVWNGPVEPSDEPPSFPKRWGWLKKIDDFPQTTFKTKIPSKLIRLLLLIVYCCFWMRIFYSLIYPYLIKPPYFHPNDGSEKIPILSLSCNSYLNWEGTNNECGLNAKNCGPLDNKEYMIRCPALCDRGGWTYSAIAVGNRRVKYTGYEIGGGALFSEEDPMVVSYPYRSDSFPCASAVHAGVISPFYGGCTKVSMQGAQNSFPSKKGMYNTGFSVAFNSFFPGSYSFRDIQGGILSGCYDPRAAVVALNMLFGLPIFYLYDSIYGYWINTIVGYWTLVLSLDPPLLTDAHDPASVYELFSVGFQRLLPLCFVLYVVWKSAVKRTLENGSPIAKVILWYPTFWLGISNNVTFDRLPVDRLTTTDLKEQAGALTAVGSIAATILTCAVIQAYSLWKSGRFKKYFKIYICFIGGLIALGSLPGLNLRIHHYILGSILVPGCATRGSSAYLFQGILVGLILSGVARWDFASIVETDTALLRGEAGASLKPPILDFNDDQNHSLSWHLNATDPVIDQIGNIDGFSLLLNDVEVYVGKNETVSIDVLRMENPALAQMMDDALDASNGTIDLYLRVARASVRSPTNRGDYTNAGVLQWPNGMWQKPEPGVS.

The segment at 1 to 26 (MGVHFDDNANTTWEATDPGVSSDCDG) is disordered. Transmembrane regions (helical) follow at residues 119–139 (LLLL…LIYP), 245–265 (SFPC…GGCT), 317–337 (AAVV…YDSI), 340–360 (YWIN…PPLL), 371–391 (ELFS…YVVW), 405–425 (IAKV…NVTF), 443–463 (GALT…VIQA), 475–495 (YFKI…LPGL), and 519–539 (AYLF…RWDF).

Its subcellular location is the vacuole membrane. This is an uncharacterized protein from Saccharomyces cerevisiae (strain ATCC 204508 / S288c) (Baker's yeast).